The sequence spans 46 residues: PhoP/PhoQ regulator MgrB (46 aa).

A helical membrane pass occupies residues Trp6–Met26.

It belongs to the MgrB family. May form homooligomers. Probably interacts with the periplasmic domain of PhoQ.

The protein resides in the cell inner membrane. Its function is as follows. PhoP-regulated transcription is redox-sensitive, being activated when the periplasm becomes more reducing. MgrB acts between DsbA/DsbB and PhoP/PhoQ in this pathway. Represses PhoP/PhoQ signaling, possibly by binding to the periplasmic domain of PhoQ, altering its activity and that of downstream effector PhoP. The chain is PhoP/PhoQ regulator MgrB from Escherichia coli O6:K15:H31 (strain 536 / UPEC).